Consider the following 438-residue polypeptide: LIM domain-containing protein C4F6.12 (438 aa).

Disordered regions lie at residues 1 to 37 (MHSP…NNLV) and 49 to 78 (TGGR…TIKQ). A compositionally biased stretch (polar residues) spans 24 to 37 (SPVSTNGSPLNNLV). Phosphoserine is present on residues Ser67 and Ser96. 3 consecutive LIM zinc-binding domains span residues 256–316 (KSCH…QFSP), 318–375 (CKHC…NKYA), and 376–435 (VKCK…SVKF).

This Schizosaccharomyces pombe (strain 972 / ATCC 24843) (Fission yeast) protein is LIM domain-containing protein C4F6.12.